We begin with the raw amino-acid sequence, 202 residues long: Regulator of G-protein signaling 16 (202 aa).

2 S-palmitoyl cysteine lipidation sites follow: Cys-2 and Cys-12. In terms of domain architecture, RGS spans 65–181 (SFDLLLSSKN…LKSPAYRDLA (117 aa)). Tyr-168 carries the post-translational modification Phosphotyrosine; by EGFR. Tyr-177 is modified (phosphotyrosine). Positions 183–202 (QATAASASPSSSSPAEPLHT) are disordered.

As to quaternary structure, interacts with GNAI1 and GNAQ. Interacts with GNAI3, GNAI3 and GNAO1. In terms of processing, palmitoylated on Cys-2 and/or Cys-12. Phosphorylated. Phosphorylation at Tyr-168 by EGFR enhances GTPase accelerating (GAP) activity toward GNAI1.

It localises to the membrane. Regulates G protein-coupled receptor signaling cascades. Inhibits signal transduction by increasing the GTPase activity of G protein alpha subunits, thereby driving them into their inactive GDP-bound form. Plays an important role in the phototransduction cascade by regulating the lifetime and effective concentration of activated transducin alpha. May regulate extra and intracellular mitogenic signals. In Bos taurus (Bovine), this protein is Regulator of G-protein signaling 16 (RGS16).